An 87-amino-acid chain; its full sequence is UPF0250 protein ESA_02696 (87 aa).

It belongs to the UPF0250 family.

The sequence is that of UPF0250 protein ESA_02696 from Cronobacter sakazakii (strain ATCC BAA-894) (Enterobacter sakazakii).